Consider the following 147-residue polypeptide: Basic phospholipase A2 beta-bungarotoxin A1 chain (147 aa).

The N-terminal stretch at 1-19 (MYPAHLLILSAVCVSLLGA) is a signal peptide. A propeptide spanning residues 20–27 (ANIPPHPL) is cleaved from the precursor. 6 cysteine pairs are disulfide-bonded: Cys54–Cys146, Cys56–Cys72, Cys71–Cys127, Cys78–Cys120, Cys88–Cys113, and Cys106–Cys118. 3 residues coordinate Ca(2+): Tyr55, Gly57, and Gly59. His75 is an active-site residue. Residue Asp76 coordinates Ca(2+). Asp121 is an active-site residue.

Belongs to the phospholipase A2 family. Group I subfamily. D49 sub-subfamily. Heterodimer; disulfide-linked. The A chains have phospholipase A2 activity and the B chains show homology with the basic protease inhibitors. The cofactor is Ca(2+). Expressed by the venom gland.

The protein resides in the secreted. The enzyme catalyses a 1,2-diacyl-sn-glycero-3-phosphocholine + H2O = a 1-acyl-sn-glycero-3-phosphocholine + a fatty acid + H(+). Functionally, snake venom phospholipase A2 (PLA2) that inhibits neuromuscular transmission by blocking acetylcholine release from the nerve termini. PLA2 catalyzes the calcium-dependent hydrolysis of the 2-acyl groups in 3-sn-phosphoglycerides. The chain is Basic phospholipase A2 beta-bungarotoxin A1 chain from Bungarus caeruleus (Indian krait).